Here is a 313-residue protein sequence, read N- to C-terminus: Porphobilinogen deaminase (313 aa).

The residue at position 242 (Cys-242) is an S-(dipyrrolylmethanemethyl)cysteine.

Belongs to the HMBS family. Monomer. Dipyrromethane serves as cofactor.

It carries out the reaction 4 porphobilinogen + H2O = hydroxymethylbilane + 4 NH4(+). It functions in the pathway porphyrin-containing compound metabolism; protoporphyrin-IX biosynthesis; coproporphyrinogen-III from 5-aminolevulinate: step 2/4. Tetrapolymerization of the monopyrrole PBG into the hydroxymethylbilane pre-uroporphyrinogen in several discrete steps. This chain is Porphobilinogen deaminase, found in Escherichia coli O7:K1 (strain IAI39 / ExPEC).